Consider the following 341-residue polypeptide: tRNA N6-adenosine threonylcarbamoyltransferase (341 aa).

2 residues coordinate Fe cation: His111 and His115. Residues 134–138 (LVSGG), Asp167, Gly180, and Asn276 contribute to the substrate site. Asp304 lines the Fe cation pocket.

It belongs to the KAE1 / TsaD family. Requires Fe(2+) as cofactor.

Its subcellular location is the cytoplasm. It catalyses the reaction L-threonylcarbamoyladenylate + adenosine(37) in tRNA = N(6)-L-threonylcarbamoyladenosine(37) in tRNA + AMP + H(+). In terms of biological role, required for the formation of a threonylcarbamoyl group on adenosine at position 37 (t(6)A37) in tRNAs that read codons beginning with adenine. Is involved in the transfer of the threonylcarbamoyl moiety of threonylcarbamoyl-AMP (TC-AMP) to the N6 group of A37, together with TsaE and TsaB. TsaD likely plays a direct catalytic role in this reaction. The sequence is that of tRNA N6-adenosine threonylcarbamoyltransferase from Pseudomonas putida (strain W619).